Here is a 246-residue protein sequence, read N- to C-terminus: Bis(5'-nucleosyl)-tetraphosphatase PrpE [asymmetrical] (246 aa).

Belongs to the PrpE family. Ni(2+) is required as a cofactor.

It carries out the reaction P(1),P(4)-bis(5'-guanosyl) tetraphosphate + H2O = GMP + GTP + 2 H(+). Its function is as follows. Asymmetrically hydrolyzes Ap4p to yield AMP and ATP. The sequence is that of Bis(5'-nucleosyl)-tetraphosphatase PrpE [asymmetrical] from Bacillus cereus (strain ZK / E33L).